Here is a 40-residue protein sequence, read N- to C-terminus: SGSKTAKIGDGCFGVPIDHIGSTTDLGCGRPRPKPTPRGS.

The propeptide occupies 1 to 8 (SGSKTAKI). Residues 1–40 (SGSKTAKIGDGCFGVPIDHIGSTTDLGCGRPRPKPTPRGS) form a disordered region. Cys12 and Cys28 form a disulfide bridge. A compositionally biased stretch (basic residues) spans 31-40 (PRPKPTPRGS).

It belongs to the natriuretic peptide family. In terms of tissue distribution, expressed by the venom gland.

It is found in the secreted. Functionally, snake venom natriuretic peptide that targets both NPR1 and NPR2. Exhibits hypotensive and vasodepressor activities. The sequence is that of Natriuretic peptide HsNP-b from Hoplocephalus stephensii (Stephens's banded snake).